Consider the following 487-residue polypeptide: Glutamate--tRNA ligase (487 aa).

A 'HIGH' region motif is present at residues 10 to 20 (PSPTGYMHVGN). The 'KMSKS' region signature appears at 251 to 255 (KLSKR). ATP is bound at residue lysine 254.

Belongs to the class-I aminoacyl-tRNA synthetase family. Glutamate--tRNA ligase type 1 subfamily. Monomer.

Its subcellular location is the cytoplasm. It catalyses the reaction tRNA(Glu) + L-glutamate + ATP = L-glutamyl-tRNA(Glu) + AMP + diphosphate. Its function is as follows. Catalyzes the attachment of glutamate to tRNA(Glu) in a two-step reaction: glutamate is first activated by ATP to form Glu-AMP and then transferred to the acceptor end of tRNA(Glu). The polypeptide is Glutamate--tRNA ligase (Clostridium kluyveri (strain ATCC 8527 / DSM 555 / NBRC 12016 / NCIMB 10680 / K1)).